A 144-amino-acid chain; its full sequence is Necrosis-inducing secreted protein 1 (144 aa).

An N-terminal signal peptide occupies residues Met-1–Ala-19. N-linked (GlcNAc...) asparagine glycans are attached at residues Asn-88, Asn-126, and Asn-133. A BAK1/SERK3-binding region spans residues Gln-103–Gly-132.

It belongs to the NIS1 effector family.

The protein resides in the secreted. It localises to the host cytoplasm. In terms of biological role, secreted effector that induces necrotic lesions in Nicotiana benthamiana. Interacts with the host receptor-like kinases (RLKs) BAK1/SERK3 and BKK1/SERK4, inhibits their kinase activity and suppresses INF1-induced pathogen-associated molecular pattern (PAMP)-triggered immunity (PTI) in N.benthamiana. Also interacts with the host receptor-like cytoplasmic kinase (RLCK) BIK1 and inhibits its kinase activity, thereby inhibiting PAMP-induced ROS generation. In PTI, phosphorylation relaying by RLKs and RLCKs is critical for the initiation of downstream signaling. The sequence is that of Necrosis-inducing secreted protein 1 from Colletotrichum higginsianum (strain IMI 349063) (Crucifer anthracnose fungus).